We begin with the raw amino-acid sequence, 336 residues long: Di/tripeptide transport system permease protein DppB (336 aa).

6 consecutive transmembrane segments (helical) span residues 10–30, 102–122, 145–165, 198–218, 257–277, and 307–327; these read GLLIPTFFGVTLLTFALIRLI, LSLAAMLFAGTFGLLAGVIAA, IFWWGLILIMLFSVSLGWTPV, AVRHLILPAIVLGTIPLAVIA, LIPVLTVFGLQVGTLLAGAVL, and ILLVATLVILVNFVVDILYGL. Residues 96–325 form the ABC transmembrane type-1 domain; it reads FPATLELSLA…LVNFVVDILY (230 aa).

This sequence belongs to the binding-protein-dependent transport system permease family. OppBC subfamily. The complex is composed of two ATP-binding proteins (DppD and DppF), two transmembrane proteins (DppB and DppC) and a solute-binding protein (DppA1-A5). Five orthologous SBPs (DppA1-A5) are present in P.aeruginosa, which increases the substrate specificity of the DppBCDF transporter.

It is found in the cell inner membrane. Functionally, part of the ABC transporter DppABCDF involved in the uptake of various di/tripeptides. Is also involved in the uptake of phaseolotoxin, a toxic tripeptide inhibiting the enzyme ornithine carbamoyltransferase. Responsible for the translocation of the substrate across the membrane. This is Di/tripeptide transport system permease protein DppB from Pseudomonas aeruginosa (strain UCBPP-PA14).